Reading from the N-terminus, the 277-residue chain is Tumor necrosis factor receptor superfamily member 4 (277 aa).

The first 28 residues, 1–28 (MCVGARRLGRGPCAALLLLGLGLSTVTG), serve as a signal peptide directing secretion. The Extracellular portion of the chain corresponds to 29 to 214 (LHCVGDTYPS…RPVEVPGGRA (186 aa)). 2 TNFR-Cys repeats span residues 30–65 (HCVG…TVCR) and 66–107 (PCGP…DTVC). 8 disulfide bridges follow: Cys-31–Cys-42, Cys-43–Cys-56, Cys-46–Cys-64, Cys-67–Cys-81, Cys-84–Cys-99, Cys-87–Cys-107, Cys-109–Cys-125, and Cys-128–Cys-141. The stretch at 108–126 (RCRAGTQPLDSYKPGVDCA) is one TNFR-Cys 3; truncated repeat. One copy of the TNFR-Cys 4 repeat lies at 127–167 (PCPPGHFSPGDNQACKPWTNCTLAGKHTLQPASNSSDAICE). N-linked (GlcNAc...) asparagine glycosylation is found at Asn-146 and Asn-160. Residues Cys-147 and Cys-166 are joined by a disulfide bond. Positions 158-209 (ASNSSDAICEDRDPPATQPQETQGPPARPITVQPTEAWPRTSQGPSTRPVEV) are disordered. Residues 215 to 235 (VAAILGLGLVLGLLGPLAILL) traverse the membrane as a helical segment. Residues 236–277 (ALYLLRRDQRLPPDAHKPPGGGSFRTPIQEEQADAHSTLAKI) are Cytoplasmic-facing. Positions 248 to 277 (PDAHKPPGGGSFRTPIQEEQADAHSTLAKI) are disordered.

As to quaternary structure, interacts with TRAF2, TRAF3 and TRAF5. In terms of assembly, (Microbial infection) Interacts with Human herpesvirus 6B/HHV-6B gQ1:gQ2 proteins.

The protein localises to the membrane. Receptor for TNFSF4/OX40L/GP34. Is a costimulatory molecule implicated in long-term T-cell immunity. Functionally, (Microbial infection) Acts as a receptor for human herpesvirus 6B/HHV-6B. In Homo sapiens (Human), this protein is Tumor necrosis factor receptor superfamily member 4 (TNFRSF4).